The sequence spans 419 residues: L-rhamnose isomerase (419 aa).

Mn(2+)-binding residues include H262, D294, and D296.

This sequence belongs to the rhamnose isomerase family. As to quaternary structure, homotetramer. Mn(2+) is required as a cofactor.

Its subcellular location is the cytoplasm. The enzyme catalyses L-rhamnopyranose = L-rhamnulose. It functions in the pathway carbohydrate degradation; L-rhamnose degradation; glycerone phosphate from L-rhamnose: step 1/3. Its function is as follows. Catalyzes the interconversion of L-rhamnose and L-rhamnulose. In Klebsiella pneumoniae (strain 342), this protein is L-rhamnose isomerase.